The following is a 204-amino-acid chain: Ribosomal RNA small subunit methyltransferase G (204 aa).

Residues G73, F78, and R139 each coordinate S-adenosyl-L-methionine.

The protein belongs to the methyltransferase superfamily. RNA methyltransferase RsmG family.

The protein resides in the cytoplasm. It carries out the reaction guanosine(527) in 16S rRNA + S-adenosyl-L-methionine = N(7)-methylguanosine(527) in 16S rRNA + S-adenosyl-L-homocysteine. Its function is as follows. Specifically methylates the N7 position of guanine in position 527 of 16S rRNA. This is Ribosomal RNA small subunit methyltransferase G from Coxiella burnetii (strain CbuG_Q212) (Coxiella burnetii (strain Q212)).